A 478-amino-acid polypeptide reads, in one-letter code: PRAME family member 4 (478 aa).

The LRR 1; degenerate repeat unit spans residues 99-126; that stretch reads RWKLQVLDLQDVCENFWMVWSEAMAHGC. One copy of the LRR 2; degenerate repeat lies at 181-205; sequence HLCCKKLKILGMPFRNIRSILKMVN. The stretch at 206–232 is one LRR 3; degenerate repeat; the sequence is LDCIQEVEVNCKWVLPILTQFTPYLGH. An LRR 4; degenerate repeat occupies 233 to 268; that stretch reads MRNLQKLILSHMDVSRYVSPEQKKEIVTQFTTQFLK. 5 LRR repeats span residues 269-294, 295-326, 327-347, 351-378, and 379-403; these read LRCL…LSCL, KTSL…SQLK, TLDL…QILL, AATL…ALSR, and CFEL…LLSH.

This sequence belongs to the PRAME family.

In Homo sapiens (Human), this protein is PRAME family member 4.